The sequence spans 221 residues: Catechol O-methyltransferase (221 aa).

Positions 41, 65, 67, 71, 89, 94, 118, and 139 each coordinate S-adenosyl-L-methionine. Mg(2+)-binding residues include Asp139, Asp165, and Asn166.

It belongs to the class I-like SAM-binding methyltransferase superfamily. Cation-dependent O-methyltransferase family. Homodimer. Mg(2+) serves as cofactor.

It catalyses the reaction a catechol + S-adenosyl-L-methionine = a guaiacol + S-adenosyl-L-homocysteine + H(+). The metal ion affects the meta and para-regiospecificity of the enzyme as well as the enzyme activity and thermal stability. Catechol O-methyltransferase that can use various catechol-like compounds. Can produce vanillic acid (meta-form) and iso-vanillic acid (para-form) from protocatechuic acid (PCA). Does not have a regiospecificity, and produces the meta- and para-forms of the products in equal proportion. In Niastella koreensis (strain DSM 17620 / KACC 11465 / NBRC 106392 / GR20-10), this protein is Catechol O-methyltransferase.